Consider the following 596-residue polypeptide: Aspartate--tRNA(Asp/Asn) ligase (596 aa).

Glu-175 provides a ligand contact to L-aspartate. Positions 199–202 are aspartate; that stretch reads QQYK. Arg-221 and His-454 together coordinate L-aspartate. 221-223 is a binding site for ATP; it reads RDE. ATP is bound at residue Glu-488. Arg-495 lines the L-aspartate pocket. An ATP-binding site is contributed by 540–543; it reads GIDR.

This sequence belongs to the class-II aminoacyl-tRNA synthetase family. Type 1 subfamily. Homodimer.

The protein localises to the cytoplasm. It catalyses the reaction tRNA(Asx) + L-aspartate + ATP = L-aspartyl-tRNA(Asx) + AMP + diphosphate. Functionally, aspartyl-tRNA synthetase with relaxed tRNA specificity since it is able to aspartylate not only its cognate tRNA(Asp) but also tRNA(Asn). Reaction proceeds in two steps: L-aspartate is first activated by ATP to form Asp-AMP and then transferred to the acceptor end of tRNA(Asp/Asn). This is Aspartate--tRNA(Asp/Asn) ligase from Mesorhizobium japonicum (strain LMG 29417 / CECT 9101 / MAFF 303099) (Mesorhizobium loti (strain MAFF 303099)).